We begin with the raw amino-acid sequence, 412 residues long: Burnettramic acids biosynthesis cluster protein E (412 aa).

Disordered stretches follow at residues 1 to 66 (MAIA…KKIR), 308 to 342 (RNPT…SLAT), and 386 to 412 (SRAE…AAKG). Positions 36–58 (EDEQWALDELQDELCQEEPSDSE) are enriched in acidic residues. Residues 395–404 (EATTEPSVQS) are compositionally biased toward polar residues.

It functions in the pathway mycotoxin biosynthesis. Its function is as follows. Part of the gene cluster that mediates the biosynthesis of burnettramic acids, an unusual class of bolaamphiphilic pyrrolizidinediones that display potent antibacterial, antifungal, and cytotoxic activities. The first step of the biosynthesis of burnettramic acids is the hydroxylation of proline by the proline hydroxylase buaE to generate 4-hydroxyproline. The PKS-NRPS buaA and trans-enoyl reductase buaC construct the highly reduced polyketide chain, and the condensation (C) domain of buaA then catalyzes the amide bond formation with the activated 4-hydroxyproline. This is followed by the R domain releasing the nascent polyketide-peptide directly via a Dieckmann condensation to afford a tetramic acid fused to the hydroxyproline, generating the bicyclic pyrrolidinedione moiety. The cytochrome P450 monooxygenases buaD and buaG are likely responsible for the multiple hydroxylations on the polyketide chain and its terminus, although in the heterologous context, buaD does not appear to be required. Therefore, while buaG may be a multifunctional cytochrome P450 monooxygenase, it cannot be ruled out that the two secondary alcohols on the polyketide chain could have an acetate origin. Finally, the glycosyltransferase buaB transfers beta-D-mannose to the aglycone burnettramic acid A to form burnettramic acid A. Burnettramic acid B is a minor cis-pyrrolizidine epimer of burnettramic acid A and it is likely that small amounts of it form naturally in acidic environments. The role of the uncharacterized protein buaF in the biosynthesis of burnettramic acids has still to be determined. This Petromyces alliaceus (Aspergillus alliaceus) protein is Burnettramic acids biosynthesis cluster protein E.